Consider the following 174-residue polypeptide: MDITIHNPLIRRPLFSWLAPSRIFDQIFGEHLQESELLPASPSLSPFLMRSPIFRMPSWLETGLSEMRLEKDKFSVNLDVKHFSPEELKVKVLGDMVEIHGKHEERQDEHGFIAREFNRKYRIPADVDPLTITSSLSLDGVLTVSAPRKQSDVPERSIPITREEKPAIAGAQRK.

Met1 is subject to N-acetylmethionine. Positions 55-163 constitute a sHSP domain; that stretch reads RMPSWLETGL…PERSIPITRE (109 aa). Residues His82, His103, Glu105, and His110 each contribute to the Zn(2+) site. The disordered stretch occupies residues 148–174; the sequence is RKQSDVPERSIPITREEKPAIAGAQRK. Residues 149–166 show a composition bias toward basic and acidic residues; that stretch reads KQSDVPERSIPITREEKP.

It belongs to the small heat shock protein (HSP20) family. Heteromer composed of three CRYAA and one CRYAB subunits. Aggregates with homologous proteins, including the small heat shock protein HSPB1, to form large heteromeric complexes. Inter-subunit bridging via zinc ions enhances stability, which is crucial as there is no protein turn over in the lens. In terms of tissue distribution, lens as well as other tissues.

May contribute to the transparency and refractive index of the lens. The chain is Alpha-crystallin B chain (CRYAB) from Anas platyrhynchos (Mallard).